A 552-amino-acid polypeptide reads, in one-letter code: MAAKVLKFSHEVLHAMSRGVEVLANAVKVTLGPKGRNVVLDKSFGAPTITKDGVSVAKEIELEDKFENMGAQMVKEVASRTSDDAGDGTTTATVLAQAILVEGIKAVIAGMNPMDLKRGIDKAVTAAVAELKKISKPCKDQKAIAQVGTISANSDKSIGDIIAEAMEKVGKEGVITVEDGSGLENALEVVEGMQFDRGYLSPYFINNQQNMSAELENPFILLVDKKISNIRELIPLLENIAKSGRPLLVIAEDIEGEALATLVVNNIRGVVKVAAVKAPGFGDRRKAMLQDIAVLTGGKVISEEVGLSLEAASLDDLGSAKRVVVTKDDTTIIDGSGDAGDIKNRVEQIRKEIENSSSDYDKEKLQERLAKLAGGVAVIKVGAATEVEMKEKKARVEDALHATRAAVEEGVVPGGGVALIRVLKSLDSVEVENEDQRVGVEIARRAMAYPLSQIVKNTGVQAAVVADKVLNHKDVNYGYNAATGEYGDMIEMGILDPTKVTRTALQNAASIAGLMITTECMVTEAPKKKEESMPGGGDMGGMGGMGGMGGMM.

ATP-binding positions include 30–33, Lys-51, 87–91, Gly-415, 480–482, and Asp-496; these read TLGP, DGTTT, and NAA.

Belongs to the chaperonin (HSP60) family. As to quaternary structure, forms a cylinder of 14 subunits composed of two heptameric rings stacked back-to-back. Interacts with the co-chaperonin GroES.

It localises to the cytoplasm. It catalyses the reaction ATP + H2O + a folded polypeptide = ADP + phosphate + an unfolded polypeptide.. Its function is as follows. Together with its co-chaperonin GroES, plays an essential role in assisting protein folding. The GroEL-GroES system forms a nano-cage that allows encapsulation of the non-native substrate proteins and provides a physical environment optimized to promote and accelerate protein folding. This chain is Chaperonin GroEL, found in Coxiella burnetii (strain RSA 331 / Henzerling II).